Reading from the N-terminus, the 174-residue chain is Early E1A protein (174 aa).

Residues 40–48 (PSLHDLFDL) are interaction with RB1 in competition with E2F1. An LXCXE motif, interaction with host RB1 motif is present at residues 106 to 110 (LLCLE). The segment at 145–163 (CLRCAYYQEQGENSICGLC) is a zinc-finger region.

This sequence belongs to the adenoviridae E1A protein family. Interacts with host UBE2I; this interaction interferes with polySUMOylation. Interacts with host RB1; this interaction induces the aberrant dissociation of RB1-E2F1 complex thereby disrupting the activity of RB1 and activating E2F1-regulated genes. Interacts with host ATF7; the interaction enhances ATF7-mediated viral transactivation activity which requires the zinc binding domains of both proteins. Isoform early E1A 32 kDa protein and isoform early E1A 26 kDa protein interact (via N-terminus) with CUL1 and E3 ubiquitin ligase RBX1; these interactions inhibit RBX1-CUL1-dependent elongation reaction of ubiquitin chains and attenuate ubiquitination of SCF(FBXW7) target proteins. Interacts (via PXLXP motif) with host ZMYND11/BS69 (via MYND-type zinc finger); this interaction inhibits E1A mediated transactivation. Interacts with host EP300; this interaction stimulates the acetylation of RB1 by recruiting EP300 and RB1 into a multimeric-protein complex. Interacts with host CTBP1 and CTBP2; this interaction seems to potentiate viral replication. Interacts with host DCAF7. Interacts with host DYRK1A. Interacts with host KPNA4; this interaction allows E1A import into the host nucleus. Interacts with host EP400; this interaction stabilizes MYC. Interacts with host TBP protein; this interaction probably disrupts the TBP-TATA complex.

It is found in the host nucleus. Functionally, plays a role in viral genome replication by driving entry of quiescent cells into the cell cycle. Stimulation of progression from G1 to S phase allows the virus to efficiently use the cellular DNA replicating machinery to achieve viral genome replication. E1A protein has both transforming and trans-activating activities. Induces the disassembly of the E2F1 transcription factor from RB1 by direct competition for the same binding site on RB1, with subsequent transcriptional activation of E2F1-regulated S-phase genes and of the E2 region of the adenoviral genome. Release of E2F1 leads to the ARF-mediated inhibition of MDM2 and causes TP53/p53 to accumulate because it is not targeted for degradation by MDM2-mediated ubiquitination anymore. This increase in TP53, in turn, would arrest the cell proliferation and direct its death but this effect is counteracted by the viral protein E1B-55K. Inactivation of the ability of RB1 to arrest the cell cycle is critical for cellular transformation, uncontrolled cellular growth and proliferation induced by viral infection. Interaction with RBX1 and CUL1 inhibits ubiquitination of the proteins targeted by SCF(FBXW7) ubiquitin ligase complex, and may be linked to unregulated host cell proliferation. The tumorigenesis-restraining activity of E1A may be related to the disruption of the host CtBP-CtIP complex through the CtBP binding motif. The chain is Early E1A protein from Canine adenovirus serotype 1 (strain RI261) (CAdV-1).